A 194-amino-acid polypeptide reads, in one-letter code: CASP-like protein 4D1 (194 aa).

Topologically, residues 1–10 are cytoplasmic; that stretch reads MASRTVLLPS. The helical transmembrane segment at 11–31 threads the bilayer; the sequence is AVLILRLLSLGLLAASLALIA. Over 32 to 55 the chain is Extracellular; sequence ADKLNVDSDPPQRYTFRDVYAYRY. Residues 56–76 traverse the membrane as a helical segment; it reads VLAVAVIGCAYTLLQLPLAAV. The Cytoplasmic portion of the chain corresponds to 77 to 94; sequence SIIASGNNKRGIGAGGGS. Residues 95 to 115 form a helical membrane-spanning segment; it reads VAVALLVLVLLADVVFALLLA. At 116-161 the chain is on the extracellular side; sequence TGAAAGFAFTYDVKRYLDGQFDDDSIGTPEVDKLHRDMDKFFDLAY. The helical transmembrane segment at 162-182 threads the bilayer; it reads AAAGLMLAAAACMALVIMLSV. The Cytoplasmic segment spans residues 183–194; sequence YSLARQVRSDYI.

The protein belongs to the Casparian strip membrane proteins (CASP) family. As to quaternary structure, homodimer and heterodimers.

It is found in the cell membrane. In Sorghum bicolor (Sorghum), this protein is CASP-like protein 4D1.